The primary structure comprises 192 residues: Ion-translocating oxidoreductase complex subunit B (192 aa).

The tract at residues 1 to 26 is hydrophobic; sequence MNAIWIAVAAVSLLGLAFGAILGYAS. Residues 32–91 enclose the 4Fe-4S domain; that stretch reads EDDPVVEKIDEILPQSQCGQCGYPGCRPYAEAISCNGEKINRCAPGGEAVMLKIAELLNV. [4Fe-4S] cluster contacts are provided by cysteine 49, cysteine 52, cysteine 57, cysteine 74, cysteine 117, cysteine 120, cysteine 123, cysteine 127, cysteine 147, cysteine 150, cysteine 153, and cysteine 157. 2 consecutive 4Fe-4S ferredoxin-type domains span residues 108–137 and 138–167; these read MVAFIDENNCIGCTKCIQACPVDAIVGATR and AMHTVMSDLCTGCNLCVDPCPTHCISLQPV.

It belongs to the 4Fe4S bacterial-type ferredoxin family. RnfB subfamily. The complex is composed of six subunits: RsxA, RsxB, RsxC, RsxD, RsxE and RsxG. It depends on [4Fe-4S] cluster as a cofactor.

It localises to the cell inner membrane. Functionally, part of a membrane-bound complex that couples electron transfer with translocation of ions across the membrane. Required to maintain the reduced state of SoxR. The polypeptide is Ion-translocating oxidoreductase complex subunit B (Escherichia coli O17:K52:H18 (strain UMN026 / ExPEC)).